The sequence spans 203 residues: Small ribosomal subunit protein uS4c (203 aa).

The S4 RNA-binding domain occupies 92-150 (MRLDNIIYRLGMAPTIANARQLVNHGHIVVNDRIVTIPSYRCKPKDIISVRNNSTSRNV).

This sequence belongs to the universal ribosomal protein uS4 family. In terms of assembly, part of the 30S ribosomal subunit. Contacts protein S5. The interaction surface between S4 and S5 is involved in control of translational fidelity.

The protein localises to the plastid. It localises to the chloroplast. In terms of biological role, one of the primary rRNA binding proteins, it binds directly to 16S rRNA where it nucleates assembly of the body of the 30S subunit. With S5 and S12 plays an important role in translational accuracy. In Chlorokybus atmophyticus (Soil alga), this protein is Small ribosomal subunit protein uS4c (rps4).